The sequence spans 504 residues: Glycine--tRNA ligase (504 aa).

Substrate is bound by residues R99 and E189. Residues 221–223, 231–236, 306–307, and 365–368 contribute to the ATP site; these read RNE, FRVREL, EI, and GVDR. 236–240 provides a ligand contact to substrate; the sequence is LEQME. 361-365 provides a ligand contact to substrate; that stretch reads EPSAG.

This sequence belongs to the class-II aminoacyl-tRNA synthetase family. As to quaternary structure, homodimer.

Its subcellular location is the cytoplasm. It catalyses the reaction tRNA(Gly) + glycine + ATP = glycyl-tRNA(Gly) + AMP + diphosphate. In terms of biological role, catalyzes the attachment of glycine to tRNA(Gly). The sequence is that of Glycine--tRNA ligase from Deinococcus geothermalis (strain DSM 11300 / CIP 105573 / AG-3a).